Here is a 441-residue protein sequence, read N- to C-terminus: ATP-dependent RNA helicase sub2 (441 aa).

Low complexity predominate over residues 23–32 (TTAAPAANGD). Residues 23 to 42 (TTAAPAANGDAAKKGDLTVS) are disordered. The Q motif signature appears at 58 to 86 (TGFRDFLLKGELLRAITDCGFEHPSEVQQ). The 176-residue stretch at 89–264 (IPTAILNVDV…KKFMRNPLEV (176 aa)) folds into the Helicase ATP-binding domain. 102–109 (AKSGLGKT) contacts ATP. The short motif at 211-214 (DECD) is the DECD box element. The 146-residue stretch at 292–437 (KLNELLDSLE…EYPEGGVDSS (146 aa)) folds into the Helicase C-terminal domain.

It belongs to the DEAD box helicase family. DECD subfamily.

The protein localises to the nucleus. The enzyme catalyses ATP + H2O = ADP + phosphate + H(+). In terms of biological role, ATP-binding RNA helicase involved in transcription elongation and required for the export of mRNA out of the nucleus. SUB2 also plays a role in pre-mRNA splicing and spliceosome assembly. May be involved in rDNA and telomeric silencing, and maintenance of genome integrity. The protein is ATP-dependent RNA helicase sub2 (sub2) of Aspergillus oryzae (strain ATCC 42149 / RIB 40) (Yellow koji mold).